The following is a 176-amino-acid chain: Sec-independent protein translocase protein TatB (176 aa).

Residues 1–21 traverse the membrane as a helical segment; sequence MLDLGLSKMALIGVVALVVLG. The disordered stretch occupies residues 155–176; the sequence is QSGAARVARHQPASLRRPTRFL.

The protein belongs to the TatB family. In terms of assembly, the Tat system comprises two distinct complexes: a TatABC complex, containing multiple copies of TatA, TatB and TatC subunits, and a separate TatA complex, containing only TatA subunits. Substrates initially bind to the TatABC complex, which probably triggers association of the separate TatA complex to form the active translocon.

It is found in the cell inner membrane. Functionally, part of the twin-arginine translocation (Tat) system that transports large folded proteins containing a characteristic twin-arginine motif in their signal peptide across membranes. Together with TatC, TatB is part of a receptor directly interacting with Tat signal peptides. TatB may form an oligomeric binding site that transiently accommodates folded Tat precursor proteins before their translocation. The chain is Sec-independent protein translocase protein TatB from Burkholderia ambifaria (strain ATCC BAA-244 / DSM 16087 / CCUG 44356 / LMG 19182 / AMMD) (Burkholderia cepacia (strain AMMD)).